The following is an 814-amino-acid chain: MKKTTITLFVLTSVFHSGNVFSRQYNFDYGSLSLPPGENASFLSVETLPGNYVVDVYLNNQLKETTELYFKSMTQTLEPCLTKEKLIKYGIAIQELHGLQFDNEQCVLLEHSPLKYTYNAANQSLLLNAPSKILSPIDSEIADENIWDDGINAFLLNYRANYLHSKVGGEDSYFGQIQPGFNFGPWRLRNLSSWQNLSSEKKFESAYIYAERGLKKIKSKLTVGDKYTSADLFDSVPFRGFSLNKDESMIPFSQRTYYPTIRGIAKTNATVEVRQNGYLIYSTSVPPGQFEIGREQIADLGVGVGVLDVSIYEKNGQVQNYTVPYSTPVLSLPDGYSKYSVTIGRYREVNNDYIDPVFFEGTYIYGLPYGFTLFGGVQWVNIYNSYAIGASKDIGEYGALSFDWKTSVSKTDTSNENGHAYGIRYNKNIAQTNTEVSLASHYYYSKNYRTFSEAIHSSEHDEFYDKNKKSTTSMLLSQALGSLGSVNLSYNYDKYWKHEGKKSIIASYGKNLNGVSLSLSYTKSTSKISEENEDLFSFLLSVPLQKLTNHEMYATYQNSSSSKHDMNHDLGITGVAFNSQLTWQARGQIEDKSKNQKATFLNASWRGTYGEIGANYSHNEINRDIGMNVSGGVIAHSSGITFGQSISDTAALVEAKGVSGAKVLGLPGVRTDFRGYTISSYLTPYMNNFISIDPTTLPINTDIRQTDIQVVPTEGAIVKAVYKTSVGTNALIRITRTNGKPLALGTVLSLKNNDGVIQSTSIVGEDGQAYVSGLSGVQKLIASWGNKPSDTCTVFYSLPDKNKGQISFLNGVCK.

Positions 1 to 30 (MKKTTITLFVLTSVFHSGNVFSRQYNFDYG) are cleaved as a signal peptide. Cys-792 and Cys-813 form a disulfide bridge.

This sequence belongs to the fimbrial export usher family.

The protein localises to the cell outer membrane. Functionally, involved in the export and assembly of the SefA fimbrial subunit. In Salmonella enteritidis, this protein is Outer membrane usher protein SefC (sefC).